The chain runs to 453 residues: Nitrilotriacetate monooxygenase component A (453 aa).

The FMN site is built by aspartate 58, threonine 107, histidine 157, tyrosine 161, serine 231, and serine 232.

The protein belongs to the NtaA/SnaA/DszA monooxygenase family. Heterodimer of two subunits, A and B.

The enzyme catalyses nitrilotriacetate + FMNH2 + O2 = aminodiacetate + FMN + glyoxylate + H2O. Its function is as follows. Hydroxylation of nitrilotriacetate. In Aminobacter aminovorans (Chelatobacter heintzii), this protein is Nitrilotriacetate monooxygenase component A (ntaA).